Consider the following 314-residue polypeptide: Large ribosomal subunit protein uL10 (314 aa).

Residues 285–314 (GAAAGGAAAEEEKEEEEESDEEGGFGDLFG) form a disordered region. The span at 293-308 (AEEEKEEEEESDEEGG) shows a compositional bias: acidic residues. Position 303 is a phosphoserine; by CK1 (Ser303).

Belongs to the universal ribosomal protein uL10 family. As to quaternary structure, component of the large ribosomal subunit. P0 forms a pentameric complex by interaction with dimers of P1 and P2. Phosphorylated.

In terms of biological role, ribosomal protein P0 is the functional equivalent of E.coli protein L10. The chain is Large ribosomal subunit protein uL10 from Podospora anserina (Pleurage anserina).